Consider the following 695-residue polypeptide: Elongation factor G 2 (695 aa).

Positions 5–280 constitute a tr-type G domain; it reads SKYRNIGIFA…AVVDYLPSPT (276 aa). GTP-binding positions include 14 to 21, 78 to 82, and 132 to 135; these read AHVDAGKT, DTPGH, and NKLD.

It belongs to the TRAFAC class translation factor GTPase superfamily. Classic translation factor GTPase family. EF-G/EF-2 subfamily.

The protein localises to the cytoplasm. Catalyzes the GTP-dependent ribosomal translocation step during translation elongation. During this step, the ribosome changes from the pre-translocational (PRE) to the post-translocational (POST) state as the newly formed A-site-bound peptidyl-tRNA and P-site-bound deacylated tRNA move to the P and E sites, respectively. Catalyzes the coordinated movement of the two tRNA molecules, the mRNA and conformational changes in the ribosome. This chain is Elongation factor G 2, found in Photobacterium profundum (strain SS9).